The chain runs to 277 residues: Formamidopyrimidine-DNA glycosylase (277 aa).

Pro-2 acts as the Schiff-base intermediate with DNA in catalysis. Glu-3 serves as the catalytic Proton donor. Residue Lys-60 is the Proton donor; for beta-elimination activity of the active site. Positions 94, 113, and 158 each coordinate DNA. The FPG-type zinc-finger motif lies at 243–277 (WVYNRAGEPCKVCGDVIQRIKLGGRSSHFCRQCQV). Arg-267 serves as the catalytic Proton donor; for delta-elimination activity.

Belongs to the FPG family. Monomer. Zn(2+) is required as a cofactor.

It catalyses the reaction Hydrolysis of DNA containing ring-opened 7-methylguanine residues, releasing 2,6-diamino-4-hydroxy-5-(N-methyl)formamidopyrimidine.. The catalysed reaction is 2'-deoxyribonucleotide-(2'-deoxyribose 5'-phosphate)-2'-deoxyribonucleotide-DNA = a 3'-end 2'-deoxyribonucleotide-(2,3-dehydro-2,3-deoxyribose 5'-phosphate)-DNA + a 5'-end 5'-phospho-2'-deoxyribonucleoside-DNA + H(+). Functionally, involved in base excision repair of DNA damaged by oxidation or by mutagenic agents. Acts as a DNA glycosylase that recognizes and removes damaged bases. Has a preference for oxidized purines, such as 7,8-dihydro-8-oxoguanine (8-oxoG). Has AP (apurinic/apyrimidinic) lyase activity and introduces nicks in the DNA strand. Cleaves the DNA backbone by beta-delta elimination to generate a single-strand break at the site of the removed base with both 3'- and 5'-phosphates. The polypeptide is Formamidopyrimidine-DNA glycosylase (Trichormus variabilis (strain ATCC 29413 / PCC 7937) (Anabaena variabilis)).